We begin with the raw amino-acid sequence, 186 residues long: UPF0301 protein Neut_0448 (186 aa).

Belongs to the UPF0301 (AlgH) family.

The protein is UPF0301 protein Neut_0448 of Nitrosomonas eutropha (strain DSM 101675 / C91 / Nm57).